Here is a 216-residue protein sequence, read N- to C-terminus: Holliday junction branch migration complex subunit RuvA (216 aa).

The interval 1 to 64 is domain I; that stretch reads MISFIKGVLI…EDAQQLYGFK (64 aa). The interval 65–143 is domain II; sequence SKVDKKVFQE…KMANEIYAQT (79 aa). Residues 144–163 are flexible linker; the sequence is SGTTTTSQDSQAQQAPTSVV. The tract at residues 164–216 is domain III; sequence LANSIFNESVDALLALGYKQKDAEKMARSAMGDATTAAEVIRKALQGSIKSKG.

This sequence belongs to the RuvA family. In terms of assembly, homotetramer. Forms an RuvA(8)-RuvB(12)-Holliday junction (HJ) complex. HJ DNA is sandwiched between 2 RuvA tetramers; dsDNA enters through RuvA and exits via RuvB. An RuvB hexamer assembles on each DNA strand where it exits the tetramer. Each RuvB hexamer is contacted by two RuvA subunits (via domain III) on 2 adjacent RuvB subunits; this complex drives branch migration. In the full resolvosome a probable DNA-RuvA(4)-RuvB(12)-RuvC(2) complex forms which resolves the HJ.

The protein localises to the cytoplasm. Functionally, the RuvA-RuvB-RuvC complex processes Holliday junction (HJ) DNA during genetic recombination and DNA repair, while the RuvA-RuvB complex plays an important role in the rescue of blocked DNA replication forks via replication fork reversal (RFR). RuvA specifically binds to HJ cruciform DNA, conferring on it an open structure. The RuvB hexamer acts as an ATP-dependent pump, pulling dsDNA into and through the RuvAB complex. HJ branch migration allows RuvC to scan DNA until it finds its consensus sequence, where it cleaves and resolves the cruciform DNA. The sequence is that of Holliday junction branch migration complex subunit RuvA from Francisella tularensis subsp. holarctica (strain FTNF002-00 / FTA).